We begin with the raw amino-acid sequence, 422 residues long: Adenylosuccinate synthetase (422 aa).

Residues 11-17 and 39-41 each bind GTP; these read GDEGKGK and GHT. Residue D12 is the Proton acceptor of the active site. Mg(2+)-binding residues include D12 and G39. IMP is bound by residues 12 to 15, 37 to 40, T129, R143, N219, T234, and R298; these read DEGK and NAGH. Residue H40 is the Proton donor of the active site. A substrate-binding site is contributed by 294–300; sequence VTTGRRR. GTP contacts are provided by residues R300, 326–328, and 409–411; these read KLD and GTG.

It belongs to the adenylosuccinate synthetase family. Homodimer. Mg(2+) is required as a cofactor.

The protein resides in the cytoplasm. The catalysed reaction is IMP + L-aspartate + GTP = N(6)-(1,2-dicarboxyethyl)-AMP + GDP + phosphate + 2 H(+). It functions in the pathway purine metabolism; AMP biosynthesis via de novo pathway; AMP from IMP: step 1/2. Plays an important role in the de novo pathway and in the salvage pathway of purine nucleotide biosynthesis. Catalyzes the first committed step in the biosynthesis of AMP from IMP. This Blastomyces gilchristii (strain SLH14081) (Blastomyces dermatitidis) protein is Adenylosuccinate synthetase.